A 93-amino-acid chain; its full sequence is Co-chaperonin GroES (93 aa).

Belongs to the GroES chaperonin family. In terms of assembly, heptamer of 7 subunits arranged in a ring. Interacts with the chaperonin GroEL.

The protein resides in the cytoplasm. Functionally, together with the chaperonin GroEL, plays an essential role in assisting protein folding. The GroEL-GroES system forms a nano-cage that allows encapsulation of the non-native substrate proteins and provides a physical environment optimized to promote and accelerate protein folding. GroES binds to the apical surface of the GroEL ring, thereby capping the opening of the GroEL channel. The chain is Co-chaperonin GroES from Streptococcus gordonii (strain Challis / ATCC 35105 / BCRC 15272 / CH1 / DL1 / V288).